We begin with the raw amino-acid sequence, 604 residues long: Complement factor I (604 aa).

Residues 1–18 form the signal peptide; it reads MKLALLILLLLNPHLSSS. Intrachain disulfides connect Cys-36/Cys-260, Cys-46/Cys-57, Cys-51/Cys-62, Cys-64/Cys-96, Cys-70/Cys-89, Cys-78/Cys-109, Cys-144/Cys-186, Cys-157/Cys-219, Cys-191/Cys-201, Cys-234/Cys-252, Cys-246/Cys-261, Cys-264/Cys-276, Cys-271/Cys-289, Cys-283/Cys-298, Cys-349/Cys-474, Cys-387/Cys-403, Cys-395/Cys-465, Cys-488/Cys-552, Cys-516/Cys-531, and Cys-542/Cys-571. Asn-40 is a glycosylation site (N-linked (GlcNAc...) asparagine). A Kazal-like domain is found at 58-111; that stretch reads IEGTCACKLPYQCPKAGTPVCATNGRGYPTYCHLKSFECLHPEIKFSNNGTCTA. Asn-106, Asn-116, and Asn-182 each carry an N-linked (GlcNAc...) asparagine glycan. Positions 117-217 constitute an SRCR domain; the sequence is VSLIYGSTDT…SKAPHGLAGV (101 aa). LDL-receptor class A domains follow at residues 218-262 and 263-299; these read VCYT…LCCK and GCRG…SGCE. Residues Lys-244, Asp-247, Val-249, Asp-251, Asp-257, and Glu-258 each contribute to the Ca(2+) site. Ca(2+) is bound by residues Asn-284, Glu-286, Asp-288, Asp-294, and Glu-295. Residues 362 to 595 enclose the Peptidase S1 domain; the sequence is VVGGKPAEMG…YFDWISYYVG (234 aa). Active-site charge relay system residues include His-402 and Asp-450. An N-linked (GlcNAc...) asparagine glycan is attached at Asn-515. Ser-546 functions as the Charge relay system in the catalytic mechanism. N-linked (GlcNAc...) asparagine glycosylation is present at Asn-557.

This sequence belongs to the peptidase S1 family. As to quaternary structure, heterodimer of a light and heavy chains; disulfide-linked. The fully processed and mature protein circulates as a zymogen, and is allosterically activated by substrate-induced remodeling of the active site. Interacts with C3b. Interacts with complement factor H. Expressed in the liver by hepatocytes. Also present in other cells such as monocytes, fibroblasts or keratinocytes.

It is found in the secreted. The protein localises to the extracellular space. The catalysed reaction is Inactivates complement subcomponents C3b, iC3b and C4b by proteolytic cleavage.. Trypsin-like serine protease that plays an essential role in regulating the immune response by controlling all complement pathways. Inhibits these pathways by cleaving three peptide bonds in the alpha-chain of C3b and two bonds in the alpha-chain of C4b thereby inactivating these proteins. Essential cofactors for these reactions include factor H and C4BP in the fluid phase and membrane cofactor protein/CD46 and CR1 on cell surfaces. The presence of these cofactors on healthy cells allows degradation of deposited C3b by CFI in order to prevent undesired complement activation, while in apoptotic cells or microbes, the absence of such cofactors leads to C3b-mediated complement activation and subsequent opsonization. This Rattus norvegicus (Rat) protein is Complement factor I (Cfi).